The primary structure comprises 680 residues: NADPH--cytochrome P450 reductase (680 aa).

Residues 1–5 (MALDK) lie on the Lumenal side of the membrane. Residues 6-23 (LDLYVIIVLAVAVAAYFA) traverse the membrane as a helical segment. The Cytoplasmic segment spans residues 24–680 (KNQFLDQPQD…VQNRYQEDVW (657 aa)). Positions 60–204 (TLLLFGSQTG…DFLTWKDNVF (145 aa)) constitute a Flavodoxin-like domain. FMN-binding positions include 66 to 71 (SQTGTA), 117 to 120 (ATYG), 152 to 161 (LGNSTYEFYN), and aspartate 187. An FAD-binding FR-type domain is found at 264 to 509 (THPYLAKISK…SGPRNKFNKF (246 aa)). Position 283 (arginine 283) interacts with NADP(+). FAD-binding positions include 439 to 442 (RYYS), 457 to 459 (TAV), and 473 to 476 (GVVT). Residues threonine 537, 599 to 600 (SR), 606 to 610 (KVYVQ), and aspartate 642 each bind NADP(+). Tryptophan 680 contacts FAD.

Belongs to the NADPH--cytochrome P450 reductase family. This sequence in the N-terminal section; belongs to the flavodoxin family. The protein in the C-terminal section; belongs to the flavoprotein pyridine nucleotide cytochrome reductase family. FAD serves as cofactor. It depends on FMN as a cofactor.

It localises to the endoplasmic reticulum membrane. The protein resides in the mitochondrion outer membrane. The protein localises to the cell membrane. It carries out the reaction 2 oxidized [cytochrome P450] + NADPH = 2 reduced [cytochrome P450] + NADP(+) + H(+). Functionally, this enzyme is required for electron transfer from NADP to cytochrome P450 in microsomes. It can also provide electron transfer to heme oxygenase and cytochrome B5. Involved in ergosterol biosynthesis. This is NADPH--cytochrome P450 reductase from Candida maltosa (Yeast).